A 429-amino-acid chain; its full sequence is Serine hydroxymethyltransferase (429 aa).

Residues Leu-128 and 132–134 (GHL) contribute to the (6S)-5,6,7,8-tetrahydrofolate site. Residue Lys-237 is modified to N6-(pyridoxal phosphate)lysine.

Belongs to the SHMT family. In terms of assembly, homodimer. Pyridoxal 5'-phosphate is required as a cofactor.

The protein localises to the cytoplasm. The enzyme catalyses (6R)-5,10-methylene-5,6,7,8-tetrahydrofolate + glycine + H2O = (6S)-5,6,7,8-tetrahydrofolate + L-serine. It functions in the pathway one-carbon metabolism; tetrahydrofolate interconversion. It participates in amino-acid biosynthesis; glycine biosynthesis; glycine from L-serine: step 1/1. Its function is as follows. Catalyzes the reversible interconversion of serine and glycine with tetrahydrofolate (THF) serving as the one-carbon carrier. This reaction serves as the major source of one-carbon groups required for the biosynthesis of purines, thymidylate, methionine, and other important biomolecules. Also exhibits THF-independent aldolase activity toward beta-hydroxyamino acids, producing glycine and aldehydes, via a retro-aldol mechanism. The protein is Serine hydroxymethyltransferase of Caulobacter vibrioides (strain ATCC 19089 / CIP 103742 / CB 15) (Caulobacter crescentus).